Reading from the N-terminus, the 332-residue chain is Phosphate acyltransferase (332 aa).

Belongs to the PlsX family. In terms of assembly, homodimer. Probably interacts with PlsY.

It is found in the cytoplasm. It catalyses the reaction a fatty acyl-[ACP] + phosphate = an acyl phosphate + holo-[ACP]. It participates in lipid metabolism; phospholipid metabolism. Its function is as follows. Catalyzes the reversible formation of acyl-phosphate (acyl-PO(4)) from acyl-[acyl-carrier-protein] (acyl-ACP). This enzyme utilizes acyl-ACP as fatty acyl donor, but not acyl-CoA. This Clostridium novyi (strain NT) protein is Phosphate acyltransferase.